The sequence spans 439 residues: Taxadien-5-alpha-ol O-acetyltransferase (439 aa).

Active-site proton acceptor residues include histidine 164 and aspartate 373.

It belongs to the plant acyltransferase family.

The catalysed reaction is taxa-4(20),11-dien-5alpha-ol + acetyl-CoA = taxa-4(20),11-dien-5alpha-yl acetate + CoA. Its pathway is alkaloid biosynthesis; taxol biosynthesis; 10-deacetyl-2-debenzoylbaccatin III from taxa-4(20),11-dien-5alpha-ol: step 1/3. The polypeptide is Taxadien-5-alpha-ol O-acetyltransferase (Taxus chinensis (Chinese yew)).